The chain runs to 427 residues: Trigger factor (427 aa).

The PPIase FKBP-type domain maps to Gly-163–Pro-248.

It belongs to the FKBP-type PPIase family. Tig subfamily.

It is found in the cytoplasm. The catalysed reaction is [protein]-peptidylproline (omega=180) = [protein]-peptidylproline (omega=0). Involved in protein export. Acts as a chaperone by maintaining the newly synthesized protein in an open conformation. Functions as a peptidyl-prolyl cis-trans isomerase. This chain is Trigger factor, found in Streptococcus thermophilus (strain CNRZ 1066).